Consider the following 419-residue polypeptide: DNA ligase (419 aa).

The segment at 1-120 (MLSQFPGQCS…ARQKRGAHTN (120 aa)) is NTD. An AD domain region spans residues 121 to 317 (RGMIPPMLVK…NYHSPHLAKL (197 aa)). Residues His149, Lys151, Glu203, and Phe232 each contribute to the ATP site. The active-site N6-AMP-lysine intermediate is Lys151. Glu203 is a binding site for a divalent metal cation. Glu291 lines the a divalent metal cation pocket. Positions 294 and 316 each coordinate ATP. The tract at residues 318-419 (KPLLDAEFIL…REPINVLEII (102 aa)) is OB domain.

Belongs to the ATP-dependent DNA ligase family. A divalent metal cation is required as a cofactor.

The protein resides in the virion. It carries out the reaction ATP + (deoxyribonucleotide)n-3'-hydroxyl + 5'-phospho-(deoxyribonucleotide)m = (deoxyribonucleotide)n+m + AMP + diphosphate.. Its function is as follows. Very low-fidelity DNA ligase that seals nicks in double-stranded DNA during DNA repair. Together with the viral repair DNA polymerase X, fills the single nucleotide gaps generated by the AP endonuclease. It is not essential for viral replication and recombination. Displays a very low adenylation activity towards DNA with 3'-dideoxy- or 3'-amino-terminated nicks compared to regular nick DNA. The protein is DNA ligase (LIG) of Ornithodoros (relapsing fever ticks).